Reading from the N-terminus, the 430-residue chain is Lipoyl synthase, mitochondrial (430 aa).

A mitochondrion-targeting transit peptide spans Met-1–Tyr-37. Over residues Thr-39–Pro-55 the composition is skewed to polar residues. Residues Thr-39–Lys-58 are disordered. [4Fe-4S] cluster-binding residues include Cys-141, Cys-146, Cys-152, Cys-172, Cys-176, Cys-179, and Ser-387. Positions Gly-155–Leu-376 constitute a Radical SAM core domain.

The protein belongs to the radical SAM superfamily. Lipoyl synthase family. The cofactor is [4Fe-4S] cluster.

It localises to the mitochondrion. It carries out the reaction [[Fe-S] cluster scaffold protein carrying a second [4Fe-4S](2+) cluster] + N(6)-octanoyl-L-lysyl-[protein] + 2 oxidized [2Fe-2S]-[ferredoxin] + 2 S-adenosyl-L-methionine + 4 H(+) = [[Fe-S] cluster scaffold protein] + N(6)-[(R)-dihydrolipoyl]-L-lysyl-[protein] + 4 Fe(3+) + 2 hydrogen sulfide + 2 5'-deoxyadenosine + 2 L-methionine + 2 reduced [2Fe-2S]-[ferredoxin]. The protein operates within protein modification; protein lipoylation via endogenous pathway; protein N(6)-(lipoyl)lysine from octanoyl-[acyl-carrier-protein]: step 2/2. Functionally, catalyzes the radical-mediated insertion of two sulfur atoms into the C-6 and C-8 positions of the octanoyl moiety bound to the lipoyl domains of lipoate-dependent enzymes, thereby converting the octanoylated domains into lipoylated derivatives. In Ajellomyces capsulatus (strain G186AR / H82 / ATCC MYA-2454 / RMSCC 2432) (Darling's disease fungus), this protein is Lipoyl synthase, mitochondrial.